The sequence spans 521 residues: U4/U6 small nuclear ribonucleoprotein Prp4 (521 aa).

At Lys-26 the chain carries N6-acetyllysine. WD repeat units follow at residues 229-268 (DDRP…LHTL), 271-318 (HNTN…VADI), 321-360 (HTVR…ILHQ), 363-402 (HSMG…IMFL), 405-444 (HLKE…VYTI), 447-487 (HQNL…LKTL), and 490-521 (HEGK…WMAE).

As to quaternary structure, component of the precatalytic spliceosome (spliceosome B complex). Component of the U4/U6-U5 tri-snRNP complex, a building block of the precatalytic spliceosome (spliceosome B complex). The U4/U6-U5 tri-snRNP complex is composed of the U4, U6 and U5 snRNAs and at least PRPF3, PRPF4, PRPF6, PRPF8, PRPF31, SNRNP200, TXNL4A, SNRNP40, SNRPB, SNRPD1, SNRPD2, SNRPD3, SNRPE, SNRPF, SNRPG, DDX23, CD2BP2, PPIH, SNU13, EFTUD2, SART1 and USP39, plus LSM2, LSM3, LSM4, LSM5, LSM6, LSM7 and LSM8. Interacts directly with PRPF18, PPIH and PRPF3. Part of a heteromeric complex containing PPIH, PRPF3 and PRPF4 that is stable in the absence of RNA. Interacts with ERCC6.

The protein resides in the nucleus. It is found in the nucleus speckle. Functionally, plays a role in pre-mRNA splicing as component of the U4/U6-U5 tri-snRNP complex that is involved in spliceosome assembly, and as component of the precatalytic spliceosome (spliceosome B complex). The chain is U4/U6 small nuclear ribonucleoprotein Prp4 (PRPF4) from Bos taurus (Bovine).